Consider the following 131-residue polypeptide: Glycine cleavage system H protein (131 aa).

Residues 24–106 enclose the Lipoyl-binding domain; that stretch reads RVTVGISDHA…YGEGWIFVVE (83 aa). An N6-lipoyllysine modification is found at K65.

It belongs to the GcvH family. As to quaternary structure, the glycine cleavage system is composed of four proteins: P, T, L and H. The cofactor is (R)-lipoate.

In terms of biological role, the glycine cleavage system catalyzes the degradation of glycine. The H protein shuttles the methylamine group of glycine from the P protein to the T protein. This is Glycine cleavage system H protein from Xanthomonas axonopodis pv. citri (strain 306).